Reading from the N-terminus, the 302-residue chain is Elongation factor Ts (302 aa).

Residues 80-83 (TDFV) form an involved in Mg(2+) ion dislocation from EF-Tu region.

This sequence belongs to the EF-Ts family.

It is found in the cytoplasm. Functionally, associates with the EF-Tu.GDP complex and induces the exchange of GDP to GTP. It remains bound to the aminoacyl-tRNA.EF-Tu.GTP complex up to the GTP hydrolysis stage on the ribosome. The chain is Elongation factor Ts from Gluconobacter oxydans (strain 621H) (Gluconobacter suboxydans).